Consider the following 282-residue polypeptide: Elongation factor Ts (282 aa).

Positions 80–83 are involved in Mg(2+) ion dislocation from EF-Tu; the sequence is TDFV.

The protein belongs to the EF-Ts family.

Its subcellular location is the cytoplasm. Functionally, associates with the EF-Tu.GDP complex and induces the exchange of GDP to GTP. It remains bound to the aminoacyl-tRNA.EF-Tu.GTP complex up to the GTP hydrolysis stage on the ribosome. The sequence is that of Elongation factor Ts from Chlamydia trachomatis serovar L2 (strain ATCC VR-902B / DSM 19102 / 434/Bu).